The following is a 321-amino-acid chain: tRNA-5-methyluridine(54) 2-sulfurtransferase (321 aa).

Residues cysteine 3, cysteine 6, cysteine 22, and histidine 25 each coordinate Zn(2+). Residues 53–55, aspartate 59, and isoleucine 79 each bind ATP; that span reads AVS. Cysteine 130 and cysteine 133 together coordinate [4Fe-4S] cluster. A Glycyl lysine isopeptide (Lys-Gly) (interchain with G-Cter in TtuB) cross-link involves residue lysine 137. ATP-binding residues include glycine 156 and aspartate 161. A [4Fe-4S] cluster-binding site is contributed by cysteine 222. Glycyl lysine isopeptide (Lys-Gly) (interchain with G-Cter in TtuB) cross-links involve residues lysine 226 and lysine 229. Zn(2+)-binding residues include cysteine 274, cysteine 277, cysteine 286, and cysteine 289.

This sequence belongs to the TtcA family. TtuA subfamily. In terms of assembly, homodimer. Is able to form a heterocomplex with TtuB. [4Fe-4S] cluster is required as a cofactor. Mg(2+) serves as cofactor. Post-translationally, conjugated to TtuB via covalent linkages involving Lys-137, Lys-226 and Lys-229.

It catalyses the reaction [TtuB sulfur-carrier protein]-C-terminal-Gly-aminoethanethioate + 5-methyluridine(54) in tRNA + ATP + H2O = [TtuB sulfur-carrier protein]-C-terminal Gly-Gly + 5-methyl-2-thiouridine(54) in tRNA + AMP + diphosphate + H(+). It participates in tRNA modification. Enzymatic activity may be regulated by TtuB conjugation. Its function is as follows. Catalyzes the ATP-dependent 2-thiolation of 5-methyluridine residue at position 54 in the T loop of tRNAs, leading to 5-methyl-2-thiouridine (m(5)s(2)U or s(2)T). This modification allows thermal stabilization of tRNAs in thermophilic microorganisms, and is required for cell growth at high temperatures. TtuA transfers the S atom from the thiocarboxylated C-terminus of TtuB to tRNA. This Thermus thermophilus (strain ATCC BAA-163 / DSM 7039 / HB27) protein is tRNA-5-methyluridine(54) 2-sulfurtransferase.